A 256-amino-acid chain; its full sequence is Imidazole glycerol phosphate synthase subunit HisF (256 aa).

Active-site residues include D11 and D130.

It belongs to the HisA/HisF family. As to quaternary structure, heterodimer of HisH and HisF.

It is found in the cytoplasm. It catalyses the reaction 5-[(5-phospho-1-deoxy-D-ribulos-1-ylimino)methylamino]-1-(5-phospho-beta-D-ribosyl)imidazole-4-carboxamide + L-glutamine = D-erythro-1-(imidazol-4-yl)glycerol 3-phosphate + 5-amino-1-(5-phospho-beta-D-ribosyl)imidazole-4-carboxamide + L-glutamate + H(+). Its pathway is amino-acid biosynthesis; L-histidine biosynthesis; L-histidine from 5-phospho-alpha-D-ribose 1-diphosphate: step 5/9. IGPS catalyzes the conversion of PRFAR and glutamine to IGP, AICAR and glutamate. The HisF subunit catalyzes the cyclization activity that produces IGP and AICAR from PRFAR using the ammonia provided by the HisH subunit. The chain is Imidazole glycerol phosphate synthase subunit HisF from Prochlorococcus marinus (strain AS9601).